Consider the following 174-residue polypeptide: Streptothricin acetyltransferase (174 aa).

The N-acetyltransferase domain maps to 20–170 (FIVREVFDVH…AMYWYWFSGA (151 aa)).

It belongs to the acetyltransferase family. GNAT subfamily.

The catalysed reaction is streptothricin F + acetyl-CoA = N(beta)-acetylstreptothricin F + CoA + H(+). In terms of biological role, involved in resistance to streptothricin, a broad-spectrum antibiotic produced by streptomycetes. Detoxifies streptothricin via acetylation of the beta amino group of the first beta-lysyl moiety of streptothricin. The protein is Streptothricin acetyltransferase (sat-1) of Escherichia coli.